Consider the following 653-residue polypeptide: Hepatocyte growth factor activator serine protease (653 aa).

The first 34 residues, 1-34, serve as a signal peptide directing secretion; the sequence is MGRQAWISSLCPLPRPCPFLLLLLLLVVPRGAQP. Positions 34-98 are disordered; the sequence is PQAGRNHTEP…SSSPPGGQVL (65 aa). The propeptide at 35-369 is removed in mature form; it reads QAGRNHTEPP…RLTACESLAR (335 aa). 3 N-linked (GlcNAc...) asparagine glycosylation sites follow: Asn39, Asn47, and Asn63. Positions 47–59 are enriched in low complexity; it reads NVTATPVTPTIPV. Positions 100-147 constitute a Fibronectin type-II domain; the sequence is ESGQPCRFPFRYGGRMLHSCTSEGSAYRKWCATTHNYDRDRAWGYCAE. 19 cysteine pairs are disulfide-bonded: Cys105-Cys130, Cys119-Cys145, Cys161-Cys172, Cys166-Cys183, Cys185-Cys194, Cys199-Cys227, Cys225-Cys234, Cys242-Cys253, Cys247-Cys264, Cys266-Cys275, Cys283-Cys364, Cys304-Cys346, Cys335-Cys359, Cys392-Cys519, Cys430-Cys446, Cys438-Cys508, Cys533-Cys602, Cys565-Cys581, and Cys592-Cys620. Residues 157–195 enclose the EGF-like 1 domain; that stretch reads ILDPCASGPCLNGGTCSSTHDHGSYHCSCPLAFTGKDCG. A Fibronectin type-I domain is found at 197-237; that stretch reads EKCFDETRYEYFEVGDHWARVSEGHVEQCGCMEGQARCEDT. In terms of domain architecture, EGF-like 2 spans 238–276; sequence HHTACLSSPCLNGGTCHLIVGTGTSVCTCPLGYAGRFCN. One can recognise a Kringle domain in the interval 283–364; that stretch reads CFLGNGTEYR…SWEYCRLTAC (82 aa). Asn287 carries an N-linked (GlcNAc...) asparagine glycan. One can recognise a Peptidase S1 domain in the interval 406-644; sequence IIGGSSSLPG…YVDWINDRIR (239 aa). Residue His445 is the Charge relay system of the active site. Asn466 carries N-linked (GlcNAc...) asparagine glycosylation. Asp495 functions as the Charge relay system in the catalytic mechanism. Asn544 carries an N-linked (GlcNAc...) asparagine glycan. The active-site Charge relay system is the Ser596.

Belongs to the peptidase S1 family. In terms of assembly, heterodimer of a short chain and a long chain linked by a disulfide bond. The active form of HGFAC presents in the serum is derived from the COOH-terminal region of the precursor by the cleavage of bonds between Arg-369 and Val-370 and Arg-405 and Ile-406.

It localises to the secreted. Serine protease that hydrolyzes the inactive zymogen hepatocyte growth factor (HGFsc) to an activated disulfide-linked heterodimer, then initiating hepatocyte growth factor receptor signaling pathway. This is Hepatocyte growth factor activator serine protease from Mus musculus (Mouse).